A 144-amino-acid chain; its full sequence is MEAEVDKLELMFQKADSDLDYLQYRLEYEVKINHPHSAGEKNAVAILKELSAIKSRYQALCARFKTVSVEQKETKSCICAILNKTMTMLQELQKQTNLELTLLTEEEKAVTERLKSHVPDVENGILQRNFDGEKISSKEIQRGV.

It belongs to the SKA2 family. In terms of assembly, component of the SKA complex, composed of SKA1, SKA2 and SKA3. The SKA complex is a homodimer organized around a central W-shaped coiled-coil structure, formed by the interacting domains of SKA1, SKA2, and SKA3, each end of the 'W' is extended further by the C-terminal microtubule-binding domains of SKA1 and SKA3; the complex forms extended structures on microtubules. May interact with NR3C1; the relevance of such interaction remains unclear in vivo. Interacts with the MIS12 complex subunit DSN1. Interacts with the NDC80 complex; the interaction is required to establish kinetochore-microtubule end-on attachments.

Its subcellular location is the cytoplasm. It localises to the cytoskeleton. It is found in the spindle. The protein localises to the chromosome. The protein resides in the centromere. Its subcellular location is the kinetochore. It localises to the microtubule organizing center. It is found in the centrosome. Functionally, component of the SKA complex, a microtubule plus end-binding complex of the outer kinetochore that stabilizes spindle microtubule-kinetochore attachments, promotes alignment of chromosomes at the mitotic spindle equator (chromosome congression) and assists suppression of the spindle assembly checkpoint. Kinetochores, consisting of a centromere-associated inner segment and a microtubule-contacting outer segment, play a crucial role in chromosome segregation by mediating the physical connection between centromeric DNA and spindle microtubules. The outer kinetochore is made up of the ten-subunit KMN network complex, comprising the MIS12, NDC80 and KNL1 complexes, and auxiliary microtubule-associated components such as the SKA complex; together they connect the outer kinetochore with the inner kinetochore, bind microtubules, and mediate interactions with mitotic checkpoint proteins that delay anaphase until chromosomes are bioriented on the spindle. The SKA complex is loaded onto bioriented kinetochores and it facilitates chromosome congression by stabilizing microtubules together with MAPRE1, and end-on attachment of the NDC80 complex to depolymerizing spindle microtubules, thereby assisting the poleward-moving kinetochore in withstanding microtubule pulling forces. The complex associates with dynamic microtubule plus-ends and can track both depolymerizing and elongating microtubules. The complex recruits protein phosphatase 1 (PP1) to the kinetochore in prometaphase and metaphase, to oppose spindle assembly checkpoint signaling and promote the onset of anaphase. Binds directly to microtubules; but with a much lower affinity than SKA1. During meiosis the SKA complex stabilizes the meiotic spindle and is required for its migration to the cortex. The polypeptide is SKA complex subunit 2 (Ska2) (Rattus norvegicus (Rat)).